The following is a 908-amino-acid chain: Putative cell signaling protein HAM1 (908 aa).

Disordered regions lie at residues 1 to 24 (MSVA…SAVS) and 177 to 359 (TKAA…EHRQ). Basic and acidic residues-rich tracts occupy residues 179 to 192 (AADK…KLDS), 231 to 247 (HPRD…DKGK), 261 to 283 (AKSD…KETG), 306 to 321 (EQKE…KRDA), and 338 to 359 (NQEK…EHRQ). The stretch at 255–282 (YNQAQEAKSDAQSKAQDLKSSARDYKET) forms a coiled coil.

Post-translationally, palmitoylated.

In terms of biological role, may act as a negative regulator of mating during vegetative growth. In Cryptococcus neoformans var. grubii serotype A (strain H99 / ATCC 208821 / CBS 10515 / FGSC 9487) (Filobasidiella neoformans var. grubii), this protein is Putative cell signaling protein HAM1.